The sequence spans 232 residues: V-type ATP synthase subunit E (232 aa).

This sequence belongs to the V-ATPase E subunit family.

Produces ATP from ADP in the presence of a proton gradient across the membrane. The polypeptide is V-type ATP synthase subunit E (atpE) (Treponema pallidum (strain Nichols)).